A 752-amino-acid polypeptide reads, in one-letter code: Two pore channel protein 2 (752 aa).

Residues 1–84 lie on the Cytoplasmic side of the membrane; it reads MAEPQAESEP…RRYYSNVCQR (84 aa). Residues 85 to 105 form a helical membrane-spanning segment; the sequence is TLSFTIFLILFLAFIETPSSL. Topologically, residues 106-127 are extracellular; sequence TSTADVRYRAAPWEPPCGLTES. Residues 128–148 form a helical membrane-spanning segment; the sequence is VEVLCLLVFAADLSVKGYLFG. Residues 149-155 lie on the Cytoplasmic side of the membrane; it reads WAHFQKN. Residues 156–176 traverse the membrane as a helical segment; the sequence is LWLLGYLVVLVVSLVDWTVSL. Topologically, residues 177-183 are extracellular; the sequence is SLVCHEP. The helical transmembrane segment at 184-204 threads the bilayer; it reads LRIRRLLRPFFLLQNSSMMKK. The tract at residues 203-207 is interaction with phosphatidylinositol 3,5-bisphosphate; the sequence is KKTLK. Over 205 to 218 the chain is Cytoplasmic; it reads TLKCIRWSLPEMAS. Residues 219–239 form a helical membrane-spanning segment; that stretch reads VGLLLAIHLCLFTMFGMLLFA. Residues 240–254 lie on the Extracellular side of the membrane; the sequence is GGKQDDGQDRERLTY. Residues 255 to 279 constitute an intramembrane region (helical; Pore-forming); it reads FQNLPESLTSLLVLLTTANNPDVMI. The Extracellular portion of the chain corresponds to 280–289; that stretch reads PAYSKNRAYA. A helical transmembrane segment spans residues 290-310; the sequence is IFFIVFTVIGSLFLMNLLTAI. At 311 to 436 the chain is on the cytoplasmic side; sequence IYSQFRGYLM…FLFGHYYFDY (126 aa). Residues 437 to 459 traverse the membrane as a helical segment; the sequence is LGNLIALANLVSICVFLVLDADV. The Extracellular segment spans residues 460 to 465; sequence LPAERD. The helical transmembrane segment at 466–486 threads the bilayer; it reads DFILGILNCVFIVYYLLEMLL. At 487 to 502 the chain is on the cytoplasmic side; it reads KVFALGLRGYLSYPSN. Residues 503–523 traverse the membrane as a helical segment; sequence VFDGLLTVVLLVLEISTLAVY. Over 524-554 the chain is Extracellular; it reads RLPHPGWRPEMVGLLSLWDMTRMLNMLIVFR. A helical membrane pass occupies residues 555–575; it reads FLRIIPSMKLMAVVASTVLGL. Topologically, residues 576 to 580 are cytoplasmic; it reads VQNMR. Residues 581–601 traverse the membrane as a helical segment; sequence AFGGILVVVYYVFAIIGINLF. At 602–635 the chain is on the extracellular side; that stretch reads RGVIVALPGNSSLAPANGSAPCGSFEQLEYWANN. 2 N-linked (GlcNAc...) asparagine glycosylation sites follow: N611 and N618. The segment at residues 636 to 658 is an intramembrane region (helical; Pore-forming); that stretch reads FDDFAAALVTLWNLMVVNNWQVF. The Extracellular portion of the chain corresponds to 659–673; the sequence is LDAYRRYSGPWSKIY. The helical transmembrane segment at 674–694 threads the bilayer; it reads FVLWWLVSSVIWVNLFLALIL. The Cytoplasmic portion of the chain corresponds to 695 to 752; it reads ENFLHKWDPRSHLQPLAGTPEATYQMTVELLFRDILEEPGEDELTERLSQHPHLWLCR.

The protein belongs to the calcium channel alpha-1 subunit (TC 1.A.1.11) family. Two pore calcium channel subfamily. In terms of assembly, homodimer. Interacts with LRRK2. Interacts with HAX1. Interacts with MTOR; the interaction is required for TPCN2 ATP sensitivity. Found in a complex with LSM12, TPCN1 and TPCN2. Interacts with LSM12. In terms of processing, N-glycosylated. As to expression, widely expressed. Expressed at high level in liver and kidney.

It is found in the late endosome membrane. The protein resides in the lysosome membrane. It localises to the melanosome membrane. The catalysed reaction is Na(+)(in) = Na(+)(out). It carries out the reaction Ca(2+)(in) = Ca(2+)(out). Its activity is regulated as follows. Regulated by Mg(2+) ions, cytosolic Mg(2+) selectively inhibits outward current while lysosomal Mg(2+) modestly inhibits both the outward and inward currents. In the absence of Mg(2+), NAADP readily activates TPCN2, with properties similar to PI(3,5)P2. Na(+) current is inhibited by ATP in a MTORC-dependent manner. ATP sensitivity is independent of PI(3,5)P2. Both current elicited by PI(3,5)P2 as well as NAADP are inhibited by tetrandrine. Intracellular channel initially characterized as a non-selective Ca(2+)-permeable channel activated by NAADP (nicotinic acid adenine dinucleotide phosphate), it is also a highly-selective Na(+) channel activated directly by PI(3,5)P2 (phosphatidylinositol 3,5-bisphosphate). Localizes to the lysosomal and late endosome membranes where it regulates organellar membrane excitability, membrane trafficking, and pH homeostasis. Is associated with a plethora of physiological processes, including mTOR-dependent nutrient sensing, skin pigmentation and autophagy. Ion selectivity is not fixed but rather agonist-dependent and under defined ionic conditions, can be readily activated by both NAADP and PI(3,5)P2. As calcium channel, it increases the pH in the lysosomal lumen, as sodium channel, it promotes lysosomal exocytosis. Plays a crucial role in endolysosomal trafficking in the endolysosomal degradation pathway and is potentially involved in the homeostatic control of many macromolecules and cell metabolites. Also expressed in melanosomes of pigmented cells where mediates a Ca(2+) channel and/or PI(3,5)P2-activated melanosomal Na(+) channel to acidify pH and inhibit tyrosinase activity required for melanogenesis and pigmentation. Unlike the voltage-dependent TPCN1, TPCN2 is voltage independent and can be activated solely by PI(3,5)P2 binding. In contrast, PI(4,5)P2, PI(3,4)P2, PI(3)P and PI(5)P have no obvious effect on channel activation. Functionally, (Microbial infection) During Ebola virus (EBOV) infection, controls the movement of endosomes containing virus particles and is required by EBOV to escape from the endosomal network into the cell cytoplasm. Its function is as follows. (Microbial infection) Required for cell entry of coronaviruses SARS-CoV and SARS-CoV-2, as well as human coronavirus EMC (HCoV-EMC), by endocytosis. In Homo sapiens (Human), this protein is Two pore channel protein 2.